Reading from the N-terminus, the 247-residue chain is 2,3-bisphosphoglycerate-dependent phosphoglycerate mutase (247 aa).

Substrate is bound by residues R8 to N15, T21 to G22, R60, E87 to Y90, K98, R114 to R115, and G183 to N184. The active-site Tele-phosphohistidine intermediate is the H9. E87 serves as the catalytic Proton donor/acceptor.

It belongs to the phosphoglycerate mutase family. BPG-dependent PGAM subfamily. As to quaternary structure, homodimer.

It carries out the reaction (2R)-2-phosphoglycerate = (2R)-3-phosphoglycerate. It functions in the pathway carbohydrate degradation; glycolysis; pyruvate from D-glyceraldehyde 3-phosphate: step 3/5. Catalyzes the interconversion of 2-phosphoglycerate and 3-phosphoglycerate. In Acidovorax ebreus (strain TPSY) (Diaphorobacter sp. (strain TPSY)), this protein is 2,3-bisphosphoglycerate-dependent phosphoglycerate mutase.